We begin with the raw amino-acid sequence, 194 residues long: Type II methyltransferase M.MjaVI (194 aa).

It belongs to the N(4)/N(6)-methyltransferase family. N(4) subfamily.

The enzyme catalyses a 2'-deoxycytidine in DNA + S-adenosyl-L-methionine = an N(4)-methyl-2'-deoxycytidine in DNA + S-adenosyl-L-homocysteine + H(+). Its function is as follows. A beta subtype methylase that recognizes the double-stranded sequence 5'-CCGG-3', methylates C-1 on both strands, and protects the DNA from cleavage by the MjaVI endonuclease. This is Type II methyltransferase M.MjaVI (mjaVIM) from Methanocaldococcus jannaschii (strain ATCC 43067 / DSM 2661 / JAL-1 / JCM 10045 / NBRC 100440) (Methanococcus jannaschii).